The following is a 285-amino-acid chain: tRNA uridine(34) hydroxylase (285 aa).

The region spanning 130–225 is the Rhodanese domain; sequence RGDDVVFFDG…YGEAFGDTGL (96 aa). The Cysteine persulfide intermediate role is filled by Cys-185.

Belongs to the TrhO family.

The catalysed reaction is uridine(34) in tRNA + AH2 + O2 = 5-hydroxyuridine(34) in tRNA + A + H2O. Its function is as follows. Catalyzes oxygen-dependent 5-hydroxyuridine (ho5U) modification at position 34 in tRNAs. This Rhodococcus opacus (strain B4) protein is tRNA uridine(34) hydroxylase.